The following is an 873-amino-acid chain: Bifunctional uridylyltransferase/uridylyl-removing enzyme (873 aa).

Residues 1 to 332 form a uridylyltransferase region; the sequence is MKYLSPLSLS…HQGEQDDAII (332 aa). The interval 333–692 is uridylyl-removing; the sequence is IDDDFQRRGR…ISKNASRGGT (360 aa). The HD domain maps to 451 to 573; sequence VDEHSIRLLK…VRDEERLDYL (123 aa). ACT domains are found at residues 693 to 777 and 800 to 873; these read EIFV…RPPR and LMEF…RLSS.

The protein belongs to the GlnD family. The cofactor is Mg(2+).

The enzyme catalyses [protein-PII]-L-tyrosine + UTP = [protein-PII]-uridylyl-L-tyrosine + diphosphate. The catalysed reaction is [protein-PII]-uridylyl-L-tyrosine + H2O = [protein-PII]-L-tyrosine + UMP + H(+). With respect to regulation, uridylyltransferase (UTase) activity is inhibited by glutamine, while glutamine activates uridylyl-removing (UR) activity. Its function is as follows. Modifies, by uridylylation and deuridylylation, the PII regulatory proteins (GlnB and homologs), in response to the nitrogen status of the cell that GlnD senses through the glutamine level. Under low glutamine levels, catalyzes the conversion of the PII proteins and UTP to PII-UMP and PPi, while under higher glutamine levels, GlnD hydrolyzes PII-UMP to PII and UMP (deuridylylation). Thus, controls uridylylation state and activity of the PII proteins, and plays an important role in the regulation of nitrogen assimilation and metabolism. In Aliivibrio fischeri (strain ATCC 700601 / ES114) (Vibrio fischeri), this protein is Bifunctional uridylyltransferase/uridylyl-removing enzyme.